Reading from the N-terminus, the 38-residue chain is Histatin-1 (38 aa).

The interval D1–N38 is disordered. A Phosphoserine modification is found at S2. The span at H8 to Y30 shows a compositional bias: basic residues.

This sequence belongs to the histatin/statherin family.

The protein localises to the secreted. Functionally, histatins (Hsts) are cationic and histidine-rich secreted peptides mainly synthesized by saliva glands of humans and higher primates. Hsts are considered to be major precursors of the protective proteinaceous structure on tooth surfaces (enamel pellicle). The chain is Histatin-1 (HTN1) from Macaca fascicularis (Crab-eating macaque).